The following is a 578-amino-acid chain: Probable acyl-activating enzyme 12, peroxisomal (578 aa).

Positions 576-578 (SRL) match the Microbody targeting signal motif.

This sequence belongs to the ATP-dependent AMP-binding enzyme family. Expressed at low levels in leaves.

Its subcellular location is the peroxisome. In terms of biological role, may act as an acid--thiol ligase that activates carboxylic acids by forming acyl-CoAs. This Arabidopsis thaliana (Mouse-ear cress) protein is Probable acyl-activating enzyme 12, peroxisomal (AAE12).